We begin with the raw amino-acid sequence, 147 residues long: Calmodulin (147 aa).

4 consecutive EF-hand domains span residues 8-43 (EQIA…LGLS), 44-79 (PSEA…QLKC), 81-116 (DSEQ…IGEK), and 120-147 (AEVD…LLSK). Residues aspartate 21, aspartate 23, serine 25, serine 27, glutamate 32, aspartate 57, aspartate 59, asparagine 61, glutamate 68, aspartate 94, asparagine 96, aspartate 98, and glutamate 105 each coordinate Ca(2+).

The protein belongs to the calmodulin family.

In terms of biological role, calmodulin mediates the control of a large number of enzymes, ion channels and other proteins by Ca(2+). Among the enzymes to be stimulated by the calmodulin-Ca(2+) complex are a number of protein kinases and phosphatases. This chain is Calmodulin (CMD1), found in Kluyveromyces lactis (strain ATCC 8585 / CBS 2359 / DSM 70799 / NBRC 1267 / NRRL Y-1140 / WM37) (Yeast).